The primary structure comprises 598 residues: MLPNIILILLIRYCSCGAGSRVYEKYGKQVQLSPATTSSYREWYDSNREHSTRNNTNVDDFQTQLKKSLENTTAAYNATFMQELIEERQRYLEKLNEGQFINDQRRLVEELLDPNYYEKTVHPKRDYTRPTRVNLSMSLYQILDVDEHMQSIEVNVWMVQHWYDEFLDWNPVDYGMINRTIVPYHQIWIPDTYLYNSEELEQKKTESLMNAQLETGHWNQKKDGAKVQLMFPAIYKLSCRMDVRWFPYDRQNCTFIISSWTHDKQTIDYWPLSSTVNLGNMARNDEWEVISFEFVRVEETFKCCTAPWVMLYAHLVIRRKPLYYMINLVVPTSIITIVAVTGFFTPTSSSSERDEKLYLGINTLLTMSVMMLMVCNQMPSTSTYVPLMSWYYIGIIMVIVVGTFLATGVLAIHGQKHYNKPISDRIRKLIYNPVVEFFILSPPTSLIDLWTEFGVISEQRHSTHLDPLLLQHMDPISHTTRADPQHFFGSISSQMCDLQSTYSYTARLATITRQYTQHAKMKALRKNQYRMSMDTSQARGVKKQKMQRRCSLEWEFLANVLDRILLTIFCGFTFAVFIILIGFDSFFTFHTDSPPKTM.

A signal peptide spans Met1–Cys16. Topologically, residues Gly17–Tyr323 are extracellular. N-linked (GlcNAc...) asparagine glycosylation is found at Asn54, Asn71, Asn77, Asn134, Asn178, and Asn252. The chain crosses the membrane as a helical span at residues Tyr324 to Phe344. The Cytoplasmic portion of the chain corresponds to Thr345–Lys356. A helical membrane pass occupies residues Leu357–Gln377. Residues Met378–Tyr391 lie on the Extracellular side of the membrane. A helical transmembrane segment spans residues Tyr392 to Ile412. Residues His413–Arg563 are Cytoplasmic-facing. Residues Ile564–Asp584 form a helical membrane-spanning segment. The Extracellular segment spans residues Ser585–Met598.

The protein belongs to the ligand-gated ion channel (TC 1.A.9) family. Acetylcholine receptor (TC 1.A.9.1) subfamily.

It is found in the postsynaptic cell membrane. The protein resides in the cell membrane. Its function is as follows. Subunit of nicotinic acetylcholine receptor (nAChR). Involved in nAChR sensitivity to nicotine. Modulates locomotion towards the drug nicotine. The protein is Acetylcholine receptor subunit alpha-type acr-5 of Caenorhabditis elegans.